We begin with the raw amino-acid sequence, 106 residues long: Nucleoid-associated protein BBta_7345 (106 aa).

Belongs to the YbaB/EbfC family. In terms of assembly, homodimer.

It localises to the cytoplasm. The protein localises to the nucleoid. Its function is as follows. Binds to DNA and alters its conformation. May be involved in regulation of gene expression, nucleoid organization and DNA protection. The polypeptide is Nucleoid-associated protein BBta_7345 (Bradyrhizobium sp. (strain BTAi1 / ATCC BAA-1182)).